The chain runs to 1863 residues: Breast cancer type 1 susceptibility protein homolog (1863 aa).

At Met-1 the chain carries N-acetylmethionine. The RING-type zinc-finger motif lies at 24 to 65 (CPICLELIKEPVSTKCDHIFCRFCMLKLLNQKKGPSQCPLCK). A Glycyl lysine isopeptide (Lys-Gly) (interchain with G-Cter in SUMO2) cross-link involves residue Lys-109. Ser-114 carries the phosphoserine modification. Composition is skewed to basic and acidic residues over residues 231-240 (KDITNTEHHQ) and 248-260 (TTEK…HPEK). The interval 231–266 (KDITNTEHHQSSNNDLNTTEKHATERHPEKYQGSSV) is disordered. Residue Lys-300 forms a Glycyl lysine isopeptide (Lys-Gly) (interchain with G-Cter in SUMO2) linkage. The segment at 305–336 (NKSKQPGLARSQHNRWTGSKETCNDRQTPSTE) is disordered. Polar residues predominate over residues 318–334 (NRWTGSKETCNDRQTPS). A Glycyl lysine isopeptide (Lys-Gly) (interchain with G-Cter in SUMO2) cross-link involves residue Lys-338. Ser-394, Ser-397, Ser-422, and Ser-433 each carry phosphoserine. Glycyl lysine isopeptide (Lys-Gly) (interchain with G-Cter in SUMO2) cross-links involve residues Lys-442, Lys-458, and Lys-518. Ser-550 is subject to Phosphoserine. Lys-582 participates in a covalent cross-link: Glycyl lysine isopeptide (Lys-Gly) (interchain with G-Cter in SUMO2). Residues 653 to 699 (NYNQMPVRHSRNLQLMEDKESATGAKKSNKPNEQTSKRHASDTFPEL) form a disordered region. Residues Ser-693, Ser-707, and Ser-724 each carry the phosphoserine modification. Glycyl lysine isopeptide (Lys-Gly) (interchain with G-Cter in SUMO2) cross-links involve residues Lys-733 and Lys-738. Residues Ser-752 and Ser-839 each carry the phosphoserine modification. The disordered stretch occupies residues 886–914 (AHSRSLKKQSPKVTSECEQKEENQGKKES). The span at 900–914 (SECEQKEENQGKKES) shows a compositional bias: basic and acidic residues. Residues Lys-917 and Lys-986 each participate in a glycyl lysine isopeptide (Lys-Gly) (interchain with G-Cter in SUMO2) cross-link. Residue Ser-987 is modified to Phosphoserine; by CHEK2. Ser-1008 carries the post-translational modification Phosphoserine. A compositionally biased stretch (polar residues) spans 1042-1059 (SNINEVGSSTNEVGSSIN). The disordered stretch occupies residues 1042 to 1062 (SNINEVGSSTNEVGSSINEVG). Lys-1079 is covalently cross-linked (Glycyl lysine isopeptide (Lys-Gly) (interchain with G-Cter in SUMO2)). Phosphoserine occurs at positions 1143, 1189, 1191, 1211, 1217, 1218, 1280, 1328, 1336, 1342, and 1387. The interval 1323–1397 (RMRHQSESQG…QSEILTTQQR (75 aa)) is disordered. The span at 1342 to 1360 (SDDEERGTGLEEDNQEEQS) shows a compositional bias: acidic residues. Residues 1373–1397 (ESETSVSEDCSRLSSQSEILTTQQR) are compositionally biased toward polar residues. Thr-1394 is subject to Phosphothreonine. An interaction with PALB2 region spans residues 1397-1424 (RDTMQDNLIKLQQEMAELEAVLEQHGSQ). Residues Ser-1423, Ser-1457, Ser-1524, and Ser-1542 each carry the phosphoserine modification. Positions 1442 to 1501 (LRNPEQSTSEKAVLTSQKSSEYPINQNPEGLSADKFEVSADSSTSKNKEPGVERSSPSKC) are disordered. Residues 1445–1470 (PEQSTSEKAVLTSQKSSEYPINQNPE) show a composition bias toward polar residues. A disordered region spans residues 1540–1618 (EKSGPHDLME…ESAQSPAAAH (79 aa)). Over residues 1607–1618 (VAESAQSPAAAH) the composition is skewed to polar residues. 2 consecutive BRCT domains span residues 1642–1736 (STER…DFEV) and 1756–1855 (PDRK…TYLI).

As to quaternary structure, heterodimer with BARD1. Part of the BRCA1-associated genome surveillance complex (BASC), which contains BRCA1, MSH2, MSH6, MLH1, ATM, BLM, PMS2 and the MRE11-RAD50-NBN protein (MRN) complex. This association could be a dynamic process changing throughout the cell cycle and within subnuclear domains. Component of the BRCA1-A complex, at least composed of BRCA1, BARD1, UIMC1/RAP80, ABRAXAS1, BRCC3/BRCC36, BABAM2 and BABAM1/NBA1. Interacts (via the BRCT domains) with ABRAXAS1 (phosphorylated form); this is important for recruitment to sites of DNA damage. Can form a heterotetramer with two molecules of ABRAXAS1 (phosphorylated form). Component of the BRCA1-RBBP8 complex. Interacts (via the BRCT domains) with RBBP8 ('Ser-327' phosphorylated form); the interaction ubiquitinates RBBP8, regulates CHEK1 activation, and involves RBBP8 in BRCA1-dependent G2/M checkpoint control on DNA damage. Associates with RNA polymerase II holoenzyme. Interacts with SMC1A, NELFB, DCLRE1C, CLSPN. CHEK1, CHEK2, BAP1, BRCC3, UBXN1 and PCLAF. Interacts (via BRCT domains) with BRIP1 (phosphorylated form). Interacts with FANCD2 (ubiquitinated form). Interacts with H2AX (phosphorylated on 'Ser-140'). Interacts (via the BRCT domains) with ACACA (phosphorylated form); the interaction prevents dephosphorylation of ACACA. Part of a BRCA complex containing BRCA1, BRCA2 and PALB2. Interacts directly with PALB2; the interaction is essential for its function in HRR. Interacts directly with BRCA2; the interaction occurs only in the presence of PALB2 which serves as the bridging protein. Interacts (via the BRCT domains) with LMO4; the interaction represses the transcriptional activity of BRCA1. Interacts (via the BRCT domains) with CCAR2 (via N-terminus); the interaction represses the transcriptional activator activity of BRCA1. Interacts with EXD2. Interacts (via C-terminus) with DHX9; this interaction is direct and links BRCA1 to the RNA polymerase II holoenzyme. Interacts with DNA helicase ZGRF1; the interaction is increased following DNA damage induction. Phosphorylated in response to IR, UV, and various stimuli that cause checkpoint activation, probably by ATM or ATR. Phosphorylation at Ser-987 by CHEK2 regulates mitotic spindle assembly. Phosphorylation by AURKA regulates centrosomal microtubule nucleation. In terms of processing, autoubiquitinated, undergoes 'Lys-6'-linked polyubiquitination. 'Lys-6'-linked polyubiquitination does not promote degradation.

The protein localises to the nucleus. It localises to the chromosome. Its subcellular location is the cytoplasm. It carries out the reaction S-ubiquitinyl-[E2 ubiquitin-conjugating enzyme]-L-cysteine + [acceptor protein]-L-lysine = [E2 ubiquitin-conjugating enzyme]-L-cysteine + N(6)-ubiquitinyl-[acceptor protein]-L-lysine.. The protein operates within protein modification; protein ubiquitination. Functionally, E3 ubiquitin-protein ligase that specifically mediates the formation of 'Lys-6'-linked polyubiquitin chains and plays a central role in DNA repair by facilitating cellular responses to DNA damage. It is unclear whether it also mediates the formation of other types of polyubiquitin chains. The BRCA1-BARD1 heterodimer coordinates a diverse range of cellular pathways such as DNA damage repair, ubiquitination and transcriptional regulation to maintain genomic stability. Regulates centrosomal microtubule nucleation. Required for appropriate cell cycle arrests after ionizing irradiation in both the S-phase and the G2 phase of the cell cycle. Required for FANCD2 targeting to sites of DNA damage. Inhibits lipid synthesis by binding to inactive phosphorylated ACACA and preventing its dephosphorylation. Contributes to homologous recombination repair (HRR) via its direct interaction with PALB2, fine-tunes recombinational repair partly through its modulatory role in the PALB2-dependent loading of BRCA2-RAD51 repair machinery at DNA breaks. Component of the BRCA1-RBBP8 complex which regulates CHEK1 activation and controls cell cycle G2/M checkpoints on DNA damage via BRCA1-mediated ubiquitination of RBBP8. Acts as a transcriptional activator. This chain is Breast cancer type 1 susceptibility protein homolog (BRCA1), found in Macaca mulatta (Rhesus macaque).